We begin with the raw amino-acid sequence, 38 residues long: AITCGQVSSALSSCLGYLKNGGAVPPGSSCGIKNLNSA.

It belongs to the plant LTP family.

It is found in the secreted. Its function is as follows. Plant non-specific lipid-transfer proteins transfer phospholipids as well as galactolipids across membranes. May play a role in wax or cutin deposition in the cell walls of expanding epidermal cells and certain secretory tissues. The polypeptide is Non-specific lipid-transfer protein P2 (Vitis sp. (Grape)).